The following is a 148-amino-acid chain: Snaclec crotocetin (148 aa).

The first 23 residues, 1–23, serve as a signal peptide directing secretion; that stretch reads MGRLVFVSFGLLVVFLSLTGTGA. Disulfide bonds link cysteine 27–cysteine 38, cysteine 55–cysteine 144, and cysteine 121–cysteine 136. The C-type lectin domain occupies 34–145; it reads YEGHCYKVFK…CSKTHKVVCK (112 aa).

Belongs to the snaclec family. As to quaternary structure, heterodimer; disulfide-linked. Expressed by the venom gland.

It localises to the secreted. In terms of biological role, interferes with one step of hemostasis (modulation of platelet aggregation, or coagulation cascade, for example). The chain is Snaclec crotocetin from Crotalus durissus terrificus (South American rattlesnake).